The following is a 92-amino-acid chain: Putative pterin-4-alpha-carbinolamine dehydratase (92 aa).

The protein belongs to the pterin-4-alpha-carbinolamine dehydratase family.

The catalysed reaction is (4aS,6R)-4a-hydroxy-L-erythro-5,6,7,8-tetrahydrobiopterin = (6R)-L-erythro-6,7-dihydrobiopterin + H2O. This is Putative pterin-4-alpha-carbinolamine dehydratase from Acidobacterium capsulatum (strain ATCC 51196 / DSM 11244 / BCRC 80197 / JCM 7670 / NBRC 15755 / NCIMB 13165 / 161).